The sequence spans 367 residues: Developmentally-regulated GTP-binding protein 1 (367 aa).

The segment at 2-16 is required for interaction with STK16; the sequence is SGTLARIAEIEAEMA. The OBG-type G domain occupies 65-290; it reads ARIGFVGFPS…LLEKIWDYLQ (226 aa). GTP is bound by residues 71–78, 96–100, 117–120, 248–251, and 271–273; these read GFPSVGKS, FTTLT, DLPG, NKID, and SAH. Residues S78 and T98 each contribute to the Mg(2+) site. The TGS domain maps to 290-366; it reads QLVRIYTKPK…EDEDVIQIVK (77 aa).

This sequence belongs to the TRAFAC class OBG-HflX-like GTPase superfamily. OBG GTPase family. Mg(2+) serves as cofactor. The cofactor is K(+). In terms of tissue distribution, expressed in many adult amd embryonic tissues. In adults, highest levels in ovaries and testes, followed by skeletal muscle, stomach, brain, kidney and liver. Weak expression in heart and brain.

Its subcellular location is the nucleus. The protein localises to the cytoplasm. It carries out the reaction GTP + H2O = GDP + phosphate + H(+). Catalyzes the conversion of GTP to GDP through hydrolysis of the gamma-phosphate bond in GTP. Binds to microtubules and promotes microtubule polymerization and bundling. GTPase activity is not necessary for these microtubule-related functions. This Xenopus laevis (African clawed frog) protein is Developmentally-regulated GTP-binding protein 1 (drg1).